The primary structure comprises 321 residues: Peptide transport system permease protein SapB (321 aa).

8 helical membrane-spanning segments follow: residues H8–L28, I41–Y61, C82–V102, Y117–L137, L150–V170, I180–I200, V249–I269, and V289–I309. The region spanning L75–T303 is the ABC transmembrane type-1 domain.

This sequence belongs to the binding-protein-dependent transport system permease family. OppBC subfamily.

Its subcellular location is the cell inner membrane. Involved in a peptide intake transport system that plays a role in the resistance to antimicrobial peptides. The polypeptide is Peptide transport system permease protein SapB (sapB) (Haemophilus influenzae (strain ATCC 51907 / DSM 11121 / KW20 / Rd)).